The sequence spans 503 residues: MEEFQRYFELDRSQQHDLLYPLIFREYIYAFAHDHGLNRSDLLENVGYDNKSSLRIVKRFITRMYRQNHLIISANDSTQNKCFGYNKNLYSQMISEGFAVIVEIPFSLRLPPSGTEIVKYYNLQSIHSIFPFLEDKFPRLNYVLDVLIPYPIHLEILVQILRYWVKDASSLHLLRLFLHEYSNWNSFITTKKSISIFSKTNPRLFLFLYNSYACEYESILLFLRNQFSHLRLTSSGVFFERIYFYGKIKHPVEEVFANDFPAIRRVFKDPFMHYVRYQGKSFLVSKDTPLLMNKWKYYLVHLWQWHFYVWAQPGRIYINLLFKHSFGFLGYLSSVRQNLSLVRSQTLENSFIMDNAIKKLDTLAPISPLIGSLAKMQFCSALGHPVSKSTWTDSSDFSIINRFARICRNLSHYYSGSSKKKNLYRIKYILRLSCVKTLACKHKSTVRVFLKRFGSELLEEFFTEEEDVLSFIFPRTYSTFRSLYRGRVWYLDIVCINDLVNQE.

This sequence belongs to the intron maturase 2 family. MatK subfamily.

Its subcellular location is the plastid. The protein resides in the chloroplast. Its function is as follows. Usually encoded in the trnK tRNA gene intron. Probably assists in splicing its own and other chloroplast group II introns. This chain is Maturase K, found in Rhamnus cathartica (Common buckthorn).